A 474-amino-acid chain; its full sequence is Glutamate--tRNA ligase (474 aa).

Positions 9 to 19 match the 'HIGH' region motif; that stretch reads PSPTGLLHMGG. Residues 238-242 carry the 'KMSKS' region motif; that stretch reads KLSKR. Residue K241 coordinates ATP.

This sequence belongs to the class-I aminoacyl-tRNA synthetase family. Glutamate--tRNA ligase type 1 subfamily. As to quaternary structure, monomer.

The protein localises to the cytoplasm. It carries out the reaction tRNA(Glu) + L-glutamate + ATP = L-glutamyl-tRNA(Glu) + AMP + diphosphate. In terms of biological role, catalyzes the attachment of glutamate to tRNA(Glu) in a two-step reaction: glutamate is first activated by ATP to form Glu-AMP and then transferred to the acceptor end of tRNA(Glu). The protein is Glutamate--tRNA ligase of Buchnera aphidicola subsp. Cinara cedri (strain Cc).